The chain runs to 204 residues: CASP-like protein 1U3 (204 aa).

Residues 1-19 (MCEGEKKKDSSSGALYCVN) lie on the Cytoplasmic side of the membrane. A helical transmembrane segment spans residues 20-40 (LALRIVVLGLAVAAAALMATA). Topologically, residues 41–63 (SQCTIFLYYGGPLHTITYKDFGP) are extracellular. Residues 64–84 (FVYLVVASSIGAFMEAIAIFL) form a helical membrane-spanning segment. Topologically, residues 85 to 97 (TICKKKDGTPAKV) are cytoplasmic. The chain crosses the membrane as a helical span at residues 98–118 (LLPLLDAAVPVLLYSATAAAF). At 119–146 (AAGDMSYCAVGKRVGVCTTAAAGNFCNQ) the chain is on the extracellular side. The chain crosses the membrane as a helical span at residues 147-167 (VHIAMYVSLAAGVALLVAEIV). At 168–204 (KHWPDSGKKKEGGGGGCGSDSDSDKSTPCHHGCHSKH) the chain is on the cytoplasmic side. The tract at residues 173 to 204 (SGKKKEGGGGGCGSDSDSDKSTPCHHGCHSKH) is disordered.

Belongs to the Casparian strip membrane proteins (CASP) family. As to quaternary structure, homodimer and heterodimers.

The protein localises to the cell membrane. In Oryza sativa subsp. japonica (Rice), this protein is CASP-like protein 1U3.